Here is a 271-residue protein sequence, read N- to C-terminus: Phospholipid scramblase family member 5 (271 aa).

A compositionally biased stretch (polar residues) spans Met1–Arg10. A disordered region spans residues Met1–Pro33. Residues Met1–Pro45 form a proline-rich domain (PRD) region.

The protein belongs to the phospholipid scramblase family.

This Homo sapiens (Human) protein is Phospholipid scramblase family member 5 (PLSCR5).